The following is a 688-amino-acid chain: T-box transcription factor TBX2-A (688 aa).

The segment at residues 104 to 277 is a DNA-binding region (T-box); that stretch reads LWDQFHKIGT…NNPFAKGFRD (174 aa). Disordered stretches follow at residues 301–436 and 606–688; these read CKAD…GSLS and PSTN…ETPK. 3 stretches are compositionally biased toward basic and acidic residues: residues 340-361, 378-403, and 412-430; these read NNRE…EIRS, RLED…KDGS, and SLEK…KSDP. A compositionally biased stretch (low complexity) spans 621–636; the sequence is PGSESSKPGSSRESSP. The stretch at 655 to 679 forms a coiled coil; that stretch reads ASMKDSINELQNIQRLVSGLESQRE. Over residues 676-688 the composition is skewed to basic and acidic residues; that stretch reads SQREISPGRETPK.

In terms of assembly, binds DNA as a monomer.

The protein resides in the nucleus. Transcription factor which acts as a transcriptional repressor. May also function as a transcriptional activator. Binds to the palindromic T site 5'-TTCACACCTAGGTGTGAA-3' DNA sequence, or a half-site, which are present in the regulatory region of several genes. The polypeptide is T-box transcription factor TBX2-A (tbx2-a) (Xenopus laevis (African clawed frog)).